A 675-amino-acid polypeptide reads, in one-letter code: Rho guanine nucleotide exchange factor 37 (675 aa).

A disordered region spans residues 1 to 26; the sequence is MAKHGADEPSSRSGSPDREGRASEDR. In terms of domain architecture, DH spans 30 to 213; the sequence is HQRLAVRELI…QDVNTNINEY (184 aa). The BAR domain maps to 254–455; sequence LKQEAGLIPR…LPHHHVPEPA (202 aa). 2 consecutive SH3 domains span residues 506–569 and 602–665; these read GPGK…LYHV and PTMN…RARS.

Functionally, may act as a guanine nucleotide exchange factor (GEF). In Homo sapiens (Human), this protein is Rho guanine nucleotide exchange factor 37 (ARHGEF37).